Reading from the N-terminus, the 481-residue chain is Glutamyl-tRNA(Gln) amidotransferase subunit A (481 aa).

Residues Lys-74 and Ser-149 each act as charge relay system in the active site. The active-site Acyl-ester intermediate is Ser-173.

This sequence belongs to the amidase family. GatA subfamily. As to quaternary structure, heterotrimer of A, B and C subunits.

It carries out the reaction L-glutamyl-tRNA(Gln) + L-glutamine + ATP + H2O = L-glutaminyl-tRNA(Gln) + L-glutamate + ADP + phosphate + H(+). Allows the formation of correctly charged Gln-tRNA(Gln) through the transamidation of misacylated Glu-tRNA(Gln) in organisms which lack glutaminyl-tRNA synthetase. The reaction takes place in the presence of glutamine and ATP through an activated gamma-phospho-Glu-tRNA(Gln). The protein is Glutamyl-tRNA(Gln) amidotransferase subunit A of Francisella tularensis subsp. tularensis (strain WY96-3418).